Here is a 72-residue protein sequence, read N- to C-terminus: Translational regulator CsrA (72 aa).

This sequence belongs to the CsrA/RsmA family. As to quaternary structure, homodimer; the beta-strands of each monomer intercalate to form a hydrophobic core, while the alpha-helices form wings that extend away from the core.

The protein resides in the cytoplasm. In terms of biological role, a translational regulator that binds mRNA to regulate translation initiation and/or mRNA stability. Usually binds in the 5'-UTR at or near the Shine-Dalgarno sequence preventing ribosome-binding, thus repressing translation. Its main target seems to be the major flagellin gene, while its function is anatagonized by FliW. The sequence is that of Translational regulator CsrA from Clostridium botulinum (strain Okra / Type B1).